Reading from the N-terminus, the 192-residue chain is Transcriptional activator GvpE (192 aa).

A DNA-binding site is contributed by 140–145 (KRKVYR). Residues 150 to 181 (EATFDTVEPAVNRLVTFSLVLKALMIDCNARY) form a leucine-zipper region.

In terms of assembly, interacts with GvpD, also with c-GvpD from H.salinarum.

The protein localises to the cytoplasm. With respect to regulation, the amount of protein that accumulates is controlled by GvpD; GvpD causes a reduction in the amount of GvpE, preventing accumulation of excessive amounts of gas vesicles. Plays a regulatory role in gas vesicle synthesis, activates transcription of the gvpA operon, and probably of the gvpD operon. Gas vesicles are hollow, gas filled proteinaceous nanostructures found in some microorganisms. They allow positioning of halobacteria at the optimal depth for growth in the poorly aerated, shallow brine pools of their habitat. Its function is as follows. Expression of a 9.5 kb mc-vac DNA fragment containing 2 divergently transcribed regions (gvpD-gvpE-gvpF-gvpG-gvpH-gvpI-gvpJ-gvpK-gvpL-gvpM and gvpA-gvpC-gvpN-gvpO) allows H.volcanii to produce gas vesicles. The protein is Transcriptional activator GvpE of Haloferax mediterranei (strain ATCC 33500 / DSM 1411 / JCM 8866 / NBRC 14739 / NCIMB 2177 / R-4) (Halobacterium mediterranei).